The following is a 243-amino-acid chain: Aldehyde decarbonylase (243 aa).

5 residues coordinate Fe cation: Glu-45, Glu-73, His-76, Glu-128, and His-160.

The protein belongs to the aldehyde decarbonylase family. Binds 2 metal cations per subunit. The catalytic dinuclear metal-binding site could be either a di-iron or a manganese-iron cofactor. is required as a cofactor.

It catalyses the reaction a long-chain fatty aldehyde + 2 NADPH + O2 + H(+) = a long-chain alkane + formate + 2 NADP(+) + H2O. Its function is as follows. Catalyzes the decarbonylation of fatty aldehydes to alkanes. Requires the presence of ferredoxin, ferredoxin reductase and NADPH for in vitro decarbonylase activity. Involved in the biosynthesis of alkanes, mainly heptadecane and pentadecane. This is Aldehyde decarbonylase from Prochlorococcus marinus (strain MIT 9313).